The sequence spans 322 residues: Beta-carotene 3-hydroxylase, chloroplastic (322 aa).

A chloroplast-targeting transit peptide spans 1 to 68; the sequence is TFHKPVSGAS…AQRCSLVRLR (68 aa). A run of 2 helical transmembrane segments spans residues 118-138 and 149-169; these read QAAA…ATYL and AVPW…ALGM. A Fatty acid hydroxylase domain is found at 164 to 286; that stretch reads GGALGMEMYA…AHQLHHSGKY (123 aa). A Histidine box-1 motif is present at residues 177–182; that stretch reads HKAIWH. Positions 191–195 match the Histidine box-2 motif; that stretch reads HKSHH. 2 helical membrane-spanning segments follow: residues 207–227 and 231–251; these read LFAI…FWLP and GAAC…YMFV. A Histidine box-3 motif is present at residues 252-257; it reads HDGLVH. The Histidine box-4 signature appears at 278–282; the sequence is HQLHH.

This sequence belongs to the sterol desaturase family.

It is found in the plastid. It localises to the chloroplast membrane. The catalysed reaction is all-trans-beta-carotene + 4 reduced [2Fe-2S]-[ferredoxin] + 2 O2 + 4 H(+) = all-trans-zeaxanthin + 4 oxidized [2Fe-2S]-[ferredoxin] + 2 H2O. Functionally, nonheme diiron monooxygenase involved in the biosynthesis of astaxanthin. Hydroxylates beta-ring of beta-carotene and catalyzes the conversion of canthaxanthin to astaxanthin. Uses ferredoxin as an electron donor. The polypeptide is Beta-carotene 3-hydroxylase, chloroplastic (CRTZ) (Haematococcus lacustris (Green alga)).